The sequence spans 1020 residues: 26S proteasome non-ATPase regulatory subunit 1 (1020 aa).

The segment at 279 to 322 (TALPSTFKPQGTTSEDGAKSEGDKSKSDEDITEETPADDKVERT) is disordered. Positions 281-293 (LPSTFKPQGTTSE) are enriched in polar residues. A Phosphothreonine modification is found at Thr291. Basic and acidic residues predominate over residues 294-307 (DGAKSEGDKSKSDE). Ser298, Ser303, and Ser305 each carry phosphoserine. Thr310 is subject to Phosphothreonine. PC repeat units lie at residues 418-452 (TATASLGVIHRGHEKDSLALMQSYLPKEAGPSSGY), 456-489 (GALYALGLIHANHGANIIDYLLQQLKDAQNENVR), 491-525 (GGCLGLGLAGMGTHRQDLYEQLKFNLYQDDAVTGE), 526-560 (AAGIAMGMVMLGSKNAQAIEDMVSYAQETQHEKIL), 562-595 (GLAVGISLTMFSRLEEADPLVTSLSSDKDPVLRR), 596-631 (SGMYTIAMAYNGTGSNKAIRKLLHVAVSDVNDDVRR), 632-664 (AAVTAIGFILFRSPEQCPSVVSLLAESYNPHVR), 666-701 (GAAMALGIACAGTGLREAIALLEPMVKFDPVNFVRQ), 702-742 (GALI…DVMA), and 745-777 (GAILAQGIIDAGGRNATLSLQSRTGHTNLQAVV). Disordered regions lie at residues 855 to 950 (QKRR…NPAR) and 999 to 1020 (FGPMNDEEKEPEPPEPFEYIED). 2 stretches are compositionally biased toward basic and acidic residues: residues 858–867 (RENADKKEDE) and 876–939 (KEGA…KEPE). Residues 1003–1020 (NDEEKEPEPPEPFEYIED) show a composition bias toward acidic residues.

It belongs to the proteasome subunit S1 family.

Its function is as follows. Acts as a regulatory subunit of the 26S proteasome which is involved in the ATP-dependent degradation of ubiquitinated proteins. This chain is 26S proteasome non-ATPase regulatory subunit 1 (Rpn2), found in Drosophila melanogaster (Fruit fly).